A 729-amino-acid chain; its full sequence is DNA topoisomerase 3 (729 aa).

Positions 3–136 (KSVVIAEKPS…IKRLWISSVT (134 aa)) constitute a Toprim domain. Residues E9 and D105 each coordinate Mg(2+). The Topo IA-type catalytic domain occupies 153 to 594 (YDNLYASAVA…EMKNYTKEIV (442 aa)). The interaction with DNA stretch occupies residues 187-192 (NCGRVQ). Y310 acts as the O-(5'-phospho-DNA)-tyrosine intermediate in catalysis. Basic and acidic residues predominate over residues 686–713 (ERRKKESGNKADKRDVQKYMKQQNKEEE). The disordered stretch occupies residues 686–719 (ERRKKESGNKADKRDVQKYMKQQNKEEEPLNNPF).

It belongs to the type IA topoisomerase family. It depends on Mg(2+) as a cofactor.

The catalysed reaction is ATP-independent breakage of single-stranded DNA, followed by passage and rejoining.. Its function is as follows. Releases the supercoiling and torsional tension of DNA, which is introduced during the DNA replication and transcription, by transiently cleaving and rejoining one strand of the DNA duplex. Introduces a single-strand break via transesterification at a target site in duplex DNA. The scissile phosphodiester is attacked by the catalytic tyrosine of the enzyme, resulting in the formation of a DNA-(5'-phosphotyrosyl)-enzyme intermediate and the expulsion of a 3'-OH DNA strand. The free DNA strand then undergoes passage around the unbroken strand, thus removing DNA supercoils. Finally, in the religation step, the DNA 3'-OH attacks the covalent intermediate to expel the active-site tyrosine and restore the DNA phosphodiester backbone. In Bacillus cereus (strain ATCC 14579 / DSM 31 / CCUG 7414 / JCM 2152 / NBRC 15305 / NCIMB 9373 / NCTC 2599 / NRRL B-3711), this protein is DNA topoisomerase 3.